A 117-amino-acid chain; its full sequence is Large ribosomal subunit protein uL18 (117 aa).

It belongs to the universal ribosomal protein uL18 family. As to quaternary structure, part of the 50S ribosomal subunit; part of the 5S rRNA/L5/L18/L25 subcomplex. Contacts the 5S and 23S rRNAs.

Its function is as follows. This is one of the proteins that bind and probably mediate the attachment of the 5S RNA into the large ribosomal subunit, where it forms part of the central protuberance. The protein is Large ribosomal subunit protein uL18 of Buchnera aphidicola subsp. Acyrthosiphon kondoi (Acyrthosiphon kondoi symbiotic bacterium).